Consider the following 545-residue polypeptide: Sphingosine-1-phosphate lyase (545 aa).

Residues 1–26 (MRPFSGSDCLKPVTEGINRAFGAKEP) lie on the Lumenal side of the membrane. Residues 27–47 (WQVATITATTVLGGVWLWTVI) traverse the membrane as a helical; Signal-anchor for type III membrane protein segment. Residues 48–545 (CQDENLYIRG…HSMYYTPSQK (498 aa)) are Cytoplasmic-facing. An N6-(pyridoxal phosphate)lysine modification is found at Lys342.

It belongs to the group II decarboxylase family. Sphingosine-1-phosphate lyase subfamily. The cofactor is pyridoxal 5'-phosphate. In terms of tissue distribution, localized to the developing gut primordium during embryogenesis.

It localises to the endoplasmic reticulum membrane. The enzyme catalyses sphinganine 1-phosphate = hexadecanal + phosphoethanolamine. Its pathway is lipid metabolism; sphingolipid metabolism. Functionally, cleaves phosphorylated sphingoid bases (PSBs), such as sphingosine-1-phosphate, into fatty aldehydes and phosphoethanolamine. Sphingolipid catabolism is required for normal development including viability, reproduction and muscle development. The chain is Sphingosine-1-phosphate lyase from Drosophila melanogaster (Fruit fly).